A 633-amino-acid polypeptide reads, in one-letter code: Chaperone protein HtpG (633 aa).

The segment at 1 to 341 (MTAPHETMSF…SADLPLNVSR (341 aa)) is a; substrate-binding. The segment at 342–562 (ELLQESRDVK…EGDMSGYLQR (221 aa)) is b. Positions 563–633 (LLKQAGQKAP…YVQRVNKLLA (71 aa)) are c.

Belongs to the heat shock protein 90 family. In terms of assembly, homodimer.

The protein resides in the cytoplasm. Functionally, molecular chaperone. Has ATPase activity. The polypeptide is Chaperone protein HtpG (Cupriavidus taiwanensis (strain DSM 17343 / BCRC 17206 / CCUG 44338 / CIP 107171 / LMG 19424 / R1) (Ralstonia taiwanensis (strain LMG 19424))).